A 91-amino-acid polypeptide reads, in one-letter code: MSFDRNQVPNWRPGYRFQYEPAQKGHVLLYPEGMIKLNDSASLIGGLIDGQRDVAAIISELEQQFPGVPEVADDIEQFMEVARAEHWIVLA.

Belongs to the PqqD family. Monomer. Interacts with PqqE.

It functions in the pathway cofactor biosynthesis; pyrroloquinoline quinone biosynthesis. In terms of biological role, functions as a PqqA binding protein and presents PqqA to PqqE, in the pyrroloquinoline quinone (PQQ) biosynthetic pathway. This is PqqA binding protein 1 (pqqD1) from Pseudomonas putida (strain ATCC 47054 / DSM 6125 / CFBP 8728 / NCIMB 11950 / KT2440).